Reading from the N-terminus, the 416-residue chain is Phosphoribosylamine--glycine ligase (416 aa).

Residues 107 to 303 (KDVMACAGVP…LAGLLMAAAT (197 aa)) form the ATP-grasp domain. An ATP-binding site is contributed by 133 to 184 (LAAFGAPYVVKDDGLAAGKGVVVTDDVEAARAHANACDRVVVEEFLDGPEVS). Mg(2+) is bound by residues Glu273 and Asn275.

It belongs to the GARS family. Requires Mg(2+) as cofactor. The cofactor is Mn(2+).

It carries out the reaction 5-phospho-beta-D-ribosylamine + glycine + ATP = N(1)-(5-phospho-beta-D-ribosyl)glycinamide + ADP + phosphate + H(+). It participates in purine metabolism; IMP biosynthesis via de novo pathway; N(1)-(5-phospho-D-ribosyl)glycinamide from 5-phospho-alpha-D-ribose 1-diphosphate: step 2/2. This chain is Phosphoribosylamine--glycine ligase, found in Streptomyces coelicolor (strain ATCC BAA-471 / A3(2) / M145).